The primary structure comprises 147 residues: Hemoglobin subunit delta (147 aa).

In terms of domain architecture, Globin spans 3-147; it reads HLTPEEKAAV…VATALAHKYH (145 aa). Heme b is bound by residues histidine 64 and histidine 93.

This sequence belongs to the globin family. Heterotetramer of two delta chains and two alpha chains. As to expression, red blood cells.

The chain is Hemoglobin subunit delta (HBD) from Ateles geoffroyi (Black-handed spider monkey).